We begin with the raw amino-acid sequence, 546 residues long: Probable protein kinase UbiB (546 aa).

Residues 124 to 502 (DFDIQPLASA…HVRQSQSRYL (379 aa)) form the Protein kinase domain. ATP-binding positions include 130–138 (LASASIAQV) and K153. The Proton acceptor role is filled by D288. 2 consecutive transmembrane segments (helical) span residues 501–521 (YLLG…VNRP) and 522–542 (EWGL…LVGW).

Belongs to the ABC1 family. UbiB subfamily.

It is found in the cell inner membrane. It participates in cofactor biosynthesis; ubiquinone biosynthesis [regulation]. In terms of biological role, is probably a protein kinase regulator of UbiI activity which is involved in aerobic coenzyme Q (ubiquinone) biosynthesis. This Salmonella enteritidis PT4 (strain P125109) protein is Probable protein kinase UbiB.